A 348-amino-acid polypeptide reads, in one-letter code: MFKMVSSPHTHSSNLTAKFMLWVMVAMLPALGMQAYFFGYGVFIQVFIALLLAVAIEIAIAKLRRKLTAFYVADLSGVLTALILAMSIPPYAPYWIIVIGIIVALLLAKHSYGGLGQNLFNPAMVAYALLLVSFPVQMTGWLVPIDLLNEPPTFGDAISLVFSGVTSDGFSVHQLLGSVDGIAQATPLDSAKTSMQKLGVEGVLQSPIFSGLFANGWWQINLAFLAGGLLLIYKSIIHWQIPAAMLGMFALLSGLTDLLLPHTHLNVVSQLFSGAMMFGAFFIATDPVTASITPRGKLIFGGLIGLFVYLIRYYGNYPDAVAFSVLLANICVPLIDHYTQPRLYGSGR.

A run of 5 helical transmembrane segments spans residues 15 to 35 (LTAK…GMQA), 36 to 56 (YFFG…AVAI), 67 to 87 (LTAF…LAMS), 88 to 108 (IPPY…LLLA), and 125 to 145 (VAYA…LVPI). At Thr-186 the chain carries FMN phosphoryl threonine. The next 5 membrane-spanning stretches (helical) occupy residues 212–232 (LFAN…LLLI), 241–261 (IPAA…LLLP), 265–285 (LNVV…FIAT), 298–318 (LIFG…GNYP), and 320–340 (AVAF…HYTQ).

This sequence belongs to the NqrB/RnfD family. In terms of assembly, the complex is composed of six subunits: RnfA, RnfB, RnfC, RnfD, RnfE and RnfG. It depends on FMN as a cofactor.

The protein resides in the cell inner membrane. In terms of biological role, part of a membrane-bound complex that couples electron transfer with translocation of ions across the membrane. The protein is Ion-translocating oxidoreductase complex subunit D of Actinobacillus pleuropneumoniae serotype 7 (strain AP76).